The sequence spans 172 residues: Large ribosomal subunit protein uL10 (172 aa).

This sequence belongs to the universal ribosomal protein uL10 family. In terms of assembly, part of the ribosomal stalk of the 50S ribosomal subunit. The N-terminus interacts with L11 and the large rRNA to form the base of the stalk. The C-terminus forms an elongated spine to which L12 dimers bind in a sequential fashion forming a multimeric L10(L12)X complex.

Its function is as follows. Forms part of the ribosomal stalk, playing a central role in the interaction of the ribosome with GTP-bound translation factors. This Lawsonia intracellularis (strain PHE/MN1-00) protein is Large ribosomal subunit protein uL10.